Reading from the N-terminus, the 242-residue chain is uncharacterized protein (242 aa).

The segment covering 1–11 (MNFEAASAPSQ) has biased composition (low complexity). A disordered region spans residues 1–45 (MNFEAASAPSQQPSPTPAPKTEEPKENGGSEQQADQPENSKKDDV).

To U.parvum UU171.

This is an uncharacterized protein from Ureaplasma parvum serovar 3 (strain ATCC 700970).